The chain runs to 122 residues: Large ribosomal subunit protein uL14 (122 aa).

Belongs to the universal ribosomal protein uL14 family. In terms of assembly, part of the 50S ribosomal subunit. Forms a cluster with proteins L3 and L19. In the 70S ribosome, L14 and L19 interact and together make contacts with the 16S rRNA in bridges B5 and B8.

In terms of biological role, binds to 23S rRNA. Forms part of two intersubunit bridges in the 70S ribosome. The protein is Large ribosomal subunit protein uL14 of Pelodictyon phaeoclathratiforme (strain DSM 5477 / BU-1).